The following is a 304-amino-acid chain: Recombination-associated protein RdgC (304 aa).

Belongs to the RdgC family.

Its subcellular location is the cytoplasm. The protein resides in the nucleoid. Its function is as follows. May be involved in recombination. This Shewanella baltica (strain OS223) protein is Recombination-associated protein RdgC.